We begin with the raw amino-acid sequence, 954 residues long: Protein teashirt (954 aa).

Disordered stretches follow at residues 20-91, 167-207, and 276-331; these read LPTA…SLPS, ESAE…PQLG, and VKGG…GSGA. Gly residues predominate over residues 47–57; it reads HGGGAGSGGVG. Residues 292–303 show a composition bias toward polar residues; it reads SKATTPQAASQP. Over residues 318-328 the composition is skewed to gly residues; sequence SGGGSGGGAAG. A C2H2-type 1 zinc finger spans residues 354-378; the sequence is FRCVWCKQSFPTLEALTTHMKDSKH. Residues 383-444 form a disordered region; it reads VPPFGNLPSN…YRGDPPTPLP (62 aa). Residues 417 to 428 are compositionally biased toward low complexity; it reads SGSASNHSPSAN. C2H2-type zinc fingers lie at residues 466 to 490 and 533 to 557; these read LKCM…ETQH and LTCK…KNNH. Disordered stretches follow at residues 563–622, 689–714, and 748–935; these read LQSA…DKND, FDTP…TSPV, and TSSE…NLTA. Residues 568-578 are compositionally biased toward basic residues; the sequence is ARKRPAPKKRE. Positions 579-588 are enriched in basic and acidic residues; sequence KSLPVRKLLE. Residues 696–712 are compositionally biased toward low complexity; that stretch reads ASLPASSPSNSSTKNTS. S750 and S758 each carry phosphoserine. Basic and acidic residues predominate over residues 778-807; the sequence is GHDEESSKPAIKQEREAESKPVKMEIKSEF. Positions 842-851 are enriched in low complexity; sequence PKTPSSAASP. Polar residues-rich tracts occupy residues 862-885 and 893-907; these read AESQ…GSSE and DSLN…SLGS. Positions 910-926 are enriched in low complexity; the sequence is AGANSRAKLAAAAAAGG.

Belongs to the teashirt C2H2-type zinc-finger protein family. As to quaternary structure, binds arm. In terms of tissue distribution, shows a dynamic expression pattern during embryogenesis. Expressed in the embryonic trunk region (PS 3-13) with expression strongest in the thoracic segments. Expressed in a small group of cells corresponding to the anal tuft from stage 14. Strongly expressed in the embryonic ventral nerve cord. Also expressed in the proximal domain of the leg imaginal disk and in the region of the wing disk that will give rise to the proximal wing hinge. Expressed at high levels in the anterior and central embryonic midgut mesoderm and in the embryonic midgut endoderm. Expressed at a low level in more posterior visceral mesoderm of the gut. From stage 12 onwards, tsh and tio are colocalized in some cells of the CNS, trunk epidermis, hindgut and Malpighian tubules.

Its subcellular location is the nucleus. It localises to the cytoplasm. Its function is as follows. Homeotic protein that acts downstream of Arm in the Wg cascade during embryogenesis to determine segment identity throughout the entire trunk. Acts cooperatively with other trunk homeotic proteins to repress head homeotic genes and therefore repress head segmental identity. Necessary, in combination with Scr, for the formation of the prothoracic segment. Promotes eye development in the dorsal region of the eye disk and suppresses eye development in the ventral region in combination with Wg-signaling and several early dorso-ventral eye patterning genes. Required for proper development of proximal leg segments. Has differential functions along the dorso-ventral axs of the antennal and leg disks. May play a role in wing hinge development. Possible involvement in chromatin structure for modulation of transcription. Binds DNA and can act as both a transcriptional repressor and activator. Positively regulates its own expression as well as that of Dll. Negatively regulates the expression of mod. Required for Wg-mediated transcriptional repression of Ubx in the midgut. Also represses transcription of lab in the midgut and is necessary for the proper formation of anterior and central midgut structures. Tiptop (tio) and teashirt (tsh) have, on the whole, common activities. Tio and tsh repress each other's expression and tsh has a crucial role for trunk patterning that is in part masked by ectopic expression of tiptop. Both genes share a common activity required for the activation of Ser and svb and the maintenance of en and wg. This chain is Protein teashirt (tsh), found in Drosophila melanogaster (Fruit fly).